Consider the following 354-residue polypeptide: S-adenosylmethionine:tRNA ribosyltransferase-isomerase (354 aa).

This sequence belongs to the QueA family. As to quaternary structure, monomer.

Its subcellular location is the cytoplasm. The catalysed reaction is 7-aminomethyl-7-carbaguanosine(34) in tRNA + S-adenosyl-L-methionine = epoxyqueuosine(34) in tRNA + adenine + L-methionine + 2 H(+). Its pathway is tRNA modification; tRNA-queuosine biosynthesis. Transfers and isomerizes the ribose moiety from AdoMet to the 7-aminomethyl group of 7-deazaguanine (preQ1-tRNA) to give epoxyqueuosine (oQ-tRNA). The polypeptide is S-adenosylmethionine:tRNA ribosyltransferase-isomerase (Pseudomonas fluorescens (strain ATCC BAA-477 / NRRL B-23932 / Pf-5)).